The sequence spans 1267 residues: Eukaryotic translation initiation factor 3 subunit A (1267 aa).

Residues 82–118 adopt a coiled-coil conformation; sequence NIKSLEDVVRAYLKLAEEKTETAKEESQQMVLDIEDL. The 184-residue stretch at 315 to 498 folds into the PCI domain; the sequence is MQRMSTRVLL…RTLSFGSDLN (184 aa). Composition is skewed to basic and acidic residues over residues 792 to 835, 844 to 1086, and 1098 to 1147; these read EERK…LEQE, YQER…DSRP, and WRER…EGSA. A disordered region spans residues 792–1267; the sequence is EERKKQRKED…DDDGWTTVRR (476 aa). Repeat copies occupy residues 956–965, 966–975, and 976–985. The segment at 956–1073 is 12 X 10 AA approximate tandem repeats of D-[DE]-[DE]-R-[GP]-[GPQT]-R-R-[GPS]-[ADFGIM]; it reads DDDRGPRRGG…DDERGGRRGM (118 aa). Residues 986 to 994 form a 4; truncated repeat; it reads DDDRGQRRG. Repeat copies occupy residues 995–1004 and 1005–1014. One copy of the 7; truncated repeat lies at 1015 to 1023; sequence DDDRGPRRS. A run of 2 repeats spans residues 1024–1033 and 1034–1043. Residues 1044–1053 form a 10; approximate repeat; the sequence is DEPRGPRRGA. Residues 1054–1063 form repeat 11; the sequence is DDDWGPRRGG. Residues 1064 to 1073 form a 12; approximate repeat; it reads DDERGGRRGM. Residues 1150-1159 show a composition bias toward gly residues; it reads RGGGGGGGGE. Residues 1162-1256 are compositionally biased toward basic and acidic residues; sequence SSWRDSRRED…KENPRRTKNE (95 aa).

This sequence belongs to the eIF-3 subunit A family. In terms of assembly, component of the eukaryotic translation initiation factor 3 (eIF-3) complex, which is composed of 13 subunits: eif3a, eif3b, eif3c, eif3d, eif3e, eif3f, eif3g, eif3h, eif3i, eif3j, eif3k, eif3l and eif3m.

It is found in the cytoplasm. RNA-binding component of the eukaryotic translation initiation factor 3 (eIF-3) complex, which is involved in protein synthesis of a specialized repertoire of mRNAs and, together with other initiation factors, stimulates binding of mRNA and methionyl-tRNAi to the 40S ribosome. The eIF-3 complex specifically targets and initiates translation of a subset of mRNAs involved in cell proliferation. This Danio rerio (Zebrafish) protein is Eukaryotic translation initiation factor 3 subunit A (eif3a).